We begin with the raw amino-acid sequence, 430 residues long: Glutamate-1-semialdehyde 2,1-aminomutase (430 aa).

An N6-(pyridoxal phosphate)lysine modification is found at lysine 265.

The protein belongs to the class-III pyridoxal-phosphate-dependent aminotransferase family. HemL subfamily. As to quaternary structure, homodimer. Pyridoxal 5'-phosphate serves as cofactor.

The protein resides in the cytoplasm. It carries out the reaction (S)-4-amino-5-oxopentanoate = 5-aminolevulinate. The protein operates within porphyrin-containing compound metabolism; protoporphyrin-IX biosynthesis; 5-aminolevulinate from L-glutamyl-tRNA(Glu): step 2/2. The chain is Glutamate-1-semialdehyde 2,1-aminomutase from Shewanella putrefaciens (strain CN-32 / ATCC BAA-453).